The chain runs to 137 residues: Phosphoribosyl-AMP cyclohydrolase (137 aa).

Position 83 (D83) interacts with Mg(2+). A Zn(2+)-binding site is contributed by C84. 2 residues coordinate Mg(2+): D85 and D87. C101 and C108 together coordinate Zn(2+).

Belongs to the PRA-CH family. Homodimer. Mg(2+) is required as a cofactor. Zn(2+) serves as cofactor.

It is found in the cytoplasm. It carries out the reaction 1-(5-phospho-beta-D-ribosyl)-5'-AMP + H2O = 1-(5-phospho-beta-D-ribosyl)-5-[(5-phospho-beta-D-ribosylamino)methylideneamino]imidazole-4-carboxamide. It functions in the pathway amino-acid biosynthesis; L-histidine biosynthesis; L-histidine from 5-phospho-alpha-D-ribose 1-diphosphate: step 3/9. In terms of biological role, catalyzes the hydrolysis of the adenine ring of phosphoribosyl-AMP. The polypeptide is Phosphoribosyl-AMP cyclohydrolase (Burkholderia mallei (strain ATCC 23344)).